We begin with the raw amino-acid sequence, 276 residues long: UPF0328 protein ECU03_0010 (276 aa).

Disordered stretches follow at residues 1-132 and 156-176; these read MAAP…PIIS and SFCQ…NMVH. Residues 106-126 show a composition bias toward basic and acidic residues; sequence HTEGCHTHEANPEPNTKHTET.

It belongs to the UPF0328 family.

This Encephalitozoon cuniculi (strain GB-M1) (Microsporidian parasite) protein is UPF0328 protein ECU03_0010.